We begin with the raw amino-acid sequence, 69 residues long: Guanine nucleotide-binding protein G(I)/G(S)/G(O) subunit gamma-T2 (69 aa).

The interval aspartate 47–serine 69 is disordered. Residues isoleucine 53 to serine 69 are compositionally biased toward basic and acidic residues. Position 66 is a cysteine methyl ester (cysteine 66). Cysteine 66 carries the S-farnesyl cysteine lipid modification. The propeptide at methionine 67 to serine 69 is removed in mature form.

The protein belongs to the G protein gamma family. As to quaternary structure, g proteins are composed of 3 units, alpha, beta and gamma.

Its subcellular location is the cell membrane. Its function is as follows. Guanine nucleotide-binding proteins (G proteins) are involved as a modulator or transducer in various transmembrane signaling systems. The beta and gamma chains are required for the GTPase activity, for replacement of GDP by GTP, and for G protein-effector interaction. This Canis lupus familiaris (Dog) protein is Guanine nucleotide-binding protein G(I)/G(S)/G(O) subunit gamma-T2 (GNGT2).